The following is a 174-amino-acid chain: Mytilin-3 (174 aa).

A signal peptide spans 1 to 16 (MLKGIILIVTIQLVNA).

In terms of tissue distribution, component of the organic matrix of calcified shell layers like nacre and prisms.

It localises to the secreted. This Mytilus californianus (California mussel) protein is Mytilin-3.